Consider the following 202-residue polypeptide: Syndecan-4 (202 aa).

Residues 1-22 (MASPRLLALLLLLVGAFNAAAA) form the signal peptide. Residues 23-152 (ESIRETEVIN…NIFERTEVLS (130 aa)) lie on the Extracellular side of the membrane. Disordered regions lie at residues 41–75 (YFSGDLPDDEDVGGPGQEPDDFEWSGSGDLEGPED) and 87–112 (VPLDNHIPERTGPGGRVPTEPKELEE). O-linked (Xyl...) (glycosaminoglycan) serine glycosylation occurs at Ser43. Residues 46-63 (LPDDEDVGGPGQEPDDFE) show a composition bias toward acidic residues. O-linked (Xyl...) (glycosaminoglycan) serine glycans are attached at residues Ser65 and Ser67. A helical transmembrane segment spans residues 153 to 173 (ALIVGGIVGILFAVFLVLLLV). Over 174–202 (YRMKKKDEGSYDLGKKPIYKKAPTNEFYA) the chain is Cytoplasmic.

Belongs to the syndecan proteoglycan family. Homodimer. Interacts with CDCP1 and SDCBP. Interacts (via its cytoplasmic domain) with GIPC (via its PDZ domain). Interacts (via its cytoplasmic domain) with NUDT16L1. Interacts with DNM2; this interaction is markedly enhanced at focal ahesion site upon induction of focal adhesions and stress-fiber formation. In terms of processing, shedding, cleavage of the extracellular domain to release a soluble form, is enhanced by a number of factors such as heparanase, growth factor receptor action for example by thrombin or EGF. Physiological events such as stress or wound healing can activate the shedding. PMA-mediated shedding is inhibited by TIMP3. Post-translationally, O-glycosylated; contains both chondroitin sulfate and heparan sulfate. Ser-43, Ser-65 and Ser-67 can all be modified by either chondroitin sulfate or heparan sulfate, and the protein exists in forms that contain only chondroitin sulfate, only heparan sulfate and both chondroitin sulfate and heparan sulfate.

The protein localises to the membrane. It localises to the secreted. Cell surface proteoglycan which regulates exosome biogenesis in concert with SDCBP and PDCD6IP. This chain is Syndecan-4, found in Sus scrofa (Pig).